Reading from the N-terminus, the 415-residue chain is Branched-chain-amino-acid aminotransferase 5, chloroplastic (415 aa).

The N-terminal 65 residues, 1–65 (MERSAVASGF…IVSEVSRNRR (65 aa)), are a transit peptide targeting the chloroplast. Position 261 is an N6-(pyridoxal phosphate)lysine (lysine 261).

This sequence belongs to the class-IV pyridoxal-phosphate-dependent aminotransferase family. Pyridoxal 5'-phosphate serves as cofactor.

It localises to the plastid. The protein resides in the chloroplast. It carries out the reaction L-leucine + 2-oxoglutarate = 4-methyl-2-oxopentanoate + L-glutamate. It catalyses the reaction L-isoleucine + 2-oxoglutarate = (S)-3-methyl-2-oxopentanoate + L-glutamate. The catalysed reaction is L-valine + 2-oxoglutarate = 3-methyl-2-oxobutanoate + L-glutamate. It functions in the pathway amino-acid biosynthesis; L-isoleucine biosynthesis; L-isoleucine from 2-oxobutanoate: step 4/4. Its pathway is amino-acid biosynthesis; L-leucine biosynthesis; L-leucine from 3-methyl-2-oxobutanoate: step 4/4. The protein operates within amino-acid biosynthesis; L-valine biosynthesis; L-valine from pyruvate: step 4/4. In terms of biological role, converts 2-oxo acids to branched-chain amino acids. Acts on leucine, isoleucine and valine. This Arabidopsis thaliana (Mouse-ear cress) protein is Branched-chain-amino-acid aminotransferase 5, chloroplastic (BCAT5).